The chain runs to 221 residues: Interleukin-12 subunit alpha (221 aa).

A signal peptide spans 1–25 (MCPLRSLLLISTLVLLHHLPHLSLG). Intrachain disulfides connect cysteine 39-cysteine 112, cysteine 66-cysteine 198, and cysteine 87-cysteine 125. The N-linked (GlcNAc...) asparagine glycan is linked to asparagine 95.

Belongs to the IL-6 superfamily. Heterodimer with IL12B; disulfide-linked. This heterodimer is known as interleukin IL-12. Heterodimer with EBI3/IL27B; not disulfide-linked. This heterodimer is known as interleukin IL-35. Interacts with NBR1; this interaction promotes IL-12 secretion.

It is found in the secreted. Heterodimerizes with IL12B to form the IL-12 cytokine or with EBI3/IL27B to form the IL-35 cytokine. IL-12 is primarily produced by professional antigen-presenting cells (APCs) such as B-cells and dendritic cells (DCs) as well as macrophages and granulocytes and regulates T-cell and natural killer-cell responses, induces the production of interferon-gamma (IFN-gamma), favors the differentiation of T-helper 1 (Th1) cells and is an important link between innate resistance and adaptive immunity. Mechanistically, exerts its biological effects through a receptor composed of IL12R1 and IL12R2 subunits. Binding to the receptor results in the rapid tyrosine phosphorylation of a number of cellular substrates including the JAK family kinases TYK2 and JAK2. In turn, recruited STAT4 gets phosphorylated and translocates to the nucleus where it regulates cytokine/growth factor responsive genes. As part of IL-35, plays essential roles in maintaining the immune homeostasis of the liver microenvironment and also functions as an immune-suppressive cytokine. Mediates biological events through unconventional receptors composed of IL12RB2 and gp130/IL6ST heterodimers or homodimers. Signaling requires the transcription factors STAT1 and STAT4, which form a unique heterodimer that binds to distinct DNA sites. In Ovis aries (Sheep), this protein is Interleukin-12 subunit alpha (IL12A).